We begin with the raw amino-acid sequence, 134 residues long: Small ribosomal subunit protein uS9 (134 aa).

A disordered region spans residues 114–134 (QKEAKNFGGPGARSKYQKSYR).

Belongs to the universal ribosomal protein uS9 family.

This chain is Small ribosomal subunit protein uS9, found in Methanosarcina mazei (strain ATCC BAA-159 / DSM 3647 / Goe1 / Go1 / JCM 11833 / OCM 88) (Methanosarcina frisia).